We begin with the raw amino-acid sequence, 424 residues long: Histidine--tRNA ligase (424 aa).

The protein belongs to the class-II aminoacyl-tRNA synthetase family. As to quaternary structure, homodimer.

Its subcellular location is the cytoplasm. The enzyme catalyses tRNA(His) + L-histidine + ATP = L-histidyl-tRNA(His) + AMP + diphosphate + H(+). This chain is Histidine--tRNA ligase, found in Salmonella gallinarum (strain 287/91 / NCTC 13346).